Here is a 1411-residue protein sequence, read N- to C-terminus: Protein three rows (1411 aa).

The tract at residues 1065-1071 (VEPIRKQ) is separase cleavage-site. Disordered regions lie at residues 1221–1240 (LEPPSKPQNPRRALTFNISP), 1268–1301 (VRPASSTTSSSSSSSSSENASSPERKSTKSKSPK), and 1330–1411 (AKST…RHRN). Low complexity-rich tracts occupy residues 1270 to 1289 (PASSTTSSSSSSSSSENASS) and 1386 to 1398 (TAEQPTTTTTATP).

Interacts with pim and Sse. Cleavage of thr contributes to inactivation of Sse.

It localises to the cytoplasm. In terms of biological role, required specifically for chromosome disjunction during all mitoses; maternally provided protein is sufficient until mitosis 14 then zygotic protein is required. Involved in formation and/or maintenance of epithelial structures: bud extension during Malpighian tubule development, and foregut and hindgut morphogenesis. In Drosophila virilis (Fruit fly), this protein is Protein three rows (thr).